The sequence spans 327 residues: Probable cell division protein WhiA (327 aa).

Residues 275-308 (SLEELGRLADPPMTKDAVAGRIRRLLSMADRKAK) constitute a DNA-binding region (H-T-H motif).

It belongs to the WhiA family.

Functionally, involved in cell division and chromosome segregation. The sequence is that of Probable cell division protein WhiA from Mycobacterium avium (strain 104).